The chain runs to 123 residues: Histone H1-like protein HC1 (123 aa).

The segment at 54–123 (IKAEKSGLLK…KPSKARGFRK (70 aa)) is disordered. A compositionally biased stretch (basic residues) spans 61 to 75 (LLKRKPSTKAPAKVK). Residues 85 to 102 (KSSAAAAKTSKAVKASKP) show a composition bias toward low complexity. Residues 103-123 (ASKKTAAKKVKKPSKARGFRK) show a composition bias toward basic residues.

It belongs to the histone H1/H5 family. HCT subfamily.

Functionally, might have a role analogous to that of eukaryotic histone proteins. The chain is Histone H1-like protein HC1 (hctA) from Chlamydia pneumoniae (Chlamydophila pneumoniae).